The chain runs to 312 residues: Olfactory receptor 5P4 (312 aa).

The Extracellular portion of the chain corresponds to 1–25 (METENDTMVTEFIILGLTDSATLRA). A glycan (N-linked (GlcNAc...) asparagine) is linked at Asn5. The helical transmembrane segment at 26-46 (ILFVFFLPVYIVTVVGNISII) threads the bilayer. Topologically, residues 47 to 54 (LLIRSSPQ) are cytoplasmic. A helical membrane pass occupies residues 55-75 (LHTPMYLFLSHLAFVDIGYST). Residues 76-99 (SVTPIMLISFLREETTIPLAGCAA) lie on the Extracellular side of the membrane. Cys97 and Cys189 form a disulfide bridge. Residues 100–120 (QLGSDVAFGTTECFLLATMAY) form a helical membrane-spanning segment. The Cytoplasmic portion of the chain corresponds to 121–133 (DRYVAICSPLLYS). Residues 134 to 154 (TQMSPAICCFLLGASYLGGCM) traverse the membrane as a helical segment. Residues 155–196 (NASSFTGCFVNLNFCGPNKVNHFFCDLFPLVKLSCGHAYIAE) lie on the Extracellular side of the membrane. The helical transmembrane segment at 197 to 217 (ISPSISSASVLVSTLSTIIVS) threads the bilayer. The Cytoplasmic segment spans residues 218 to 237 (YIYILHSILRMRSAEGRNKA). A helical membrane pass occupies residues 238 to 258 (FSTCTSHLTAVTLFYGTVLFV). Over 259–271 (YVMPKSSYSADQV) the chain is Extracellular. The chain crosses the membrane as a helical span at residues 272–292 (KVASVVYTVVIPMLNPLIYSL). Topologically, residues 293 to 312 (RNKEVKEAMKKLMARTHWFP) are cytoplasmic.

This sequence belongs to the G-protein coupled receptor 1 family.

It localises to the cell membrane. Its function is as follows. Potential odorant receptor. This Mus musculus (Mouse) protein is Olfactory receptor 5P4.